The sequence spans 207 residues: Casparian strip membrane protein 1 (207 aa).

The segment covering 1–12 has biased composition (polar residues); the sequence is MEGESTAVNITE. Residues 1–24 are disordered; that stretch reads MEGESTAVNITETPKERKGKAPLL. At 1-48 the chain is on the cytoplasmic side; it reads MEGESTAVNITETPKERKGKAPLLAPPPASGGIKTIVQKAPKGGYKRG. Residues 49-69 form a helical membrane-spanning segment; the sequence is LAVFDVVLRIAGIAAALGAVI. The Extracellular segment spans residues 70 to 98; that stretch reads AMGSTDQTLPFFTQFFQFKAEFDDLPVFT. Residues 99–119 form a helical membrane-spanning segment; it reads FFVIANAITAAYLALSIPISI. The Cytoplasmic portion of the chain corresponds to 120–138; it reads VCIIRPHLVGPRVLLTFLD. The chain crosses the membrane as a helical span at residues 139–159; sequence TVMVGLTTAAAGGAASIVYLA. Over 160–184 the chain is Extracellular; it reads HNGNSDANWPAICQQFNDFCQEVSG. A helical transmembrane segment spans residues 185–205; that stretch reads AVVASFITVVVLMFLIVLSAF. The Cytoplasmic segment spans residues 206–207; that stretch reads SL.

This sequence belongs to the Casparian strip membrane proteins (CASP) family. Homodimer and heterodimers.

Its subcellular location is the cell membrane. Regulates membrane-cell wall junctions and localized cell wall deposition. Required for establishment of the Casparian strip membrane domain (CSD) and the subsequent formation of Casparian strips, a cell wall modification of the root endodermis that determines an apoplastic barrier between the intraorganismal apoplasm and the extraorganismal apoplasm and prevents lateral diffusion. This chain is Casparian strip membrane protein 1, found in Taraxacum kok-saghyz (Russian dandelion).